Here is a 225-residue protein sequence, read N- to C-terminus: UPF0700 transmembrane protein YoaK (225 aa).

A run of 6 helical transmembrane segments spans residues 10–30 (LLSL…LSLG), 56–76 (VFNS…ATLM), 99–119 (ILFV…HILI), 137–157 (GIAG…LEDI), 174–194 (TVLR…VALA), and 197–217 (DFYH…MMTA).

The protein belongs to the UPF0700 family.

It localises to the cell membrane. This is UPF0700 transmembrane protein YoaK (yoaK) from Bacillus subtilis (strain 168).